Consider the following 380-residue polypeptide: Cytochrome b (380 aa).

4 helical membrane-spanning segments follow: residues 33 to 53 (FGSL…FLAM), 77 to 98 (WLIR…YLHV), 113 to 133 (WNIG…GYVL), and 178 to 198 (FFAF…IHLL). Heme b is bound by residues His83 and His97. 2 residues coordinate heme b: His182 and His196. An a ubiquinone-binding site is contributed by His201. Transmembrane regions (helical) follow at residues 226 to 246 (YKDL…ALFS), 288 to 308 (LGGV…PMLH), 320 to 340 (PSQI…WIGG), and 347 to 367 (FVLI…IALP).

It belongs to the cytochrome b family. As to quaternary structure, the cytochrome bc1 complex contains 3 respiratory subunits (MT-CYB, CYC1 and UQCRFS1), 2 core proteins (UQCRC1 and UQCRC2) and probably 6 low-molecular weight proteins. Heme b serves as cofactor.

It is found in the mitochondrion inner membrane. Functionally, component of the ubiquinol-cytochrome c reductase complex (complex III or cytochrome b-c1 complex) that is part of the mitochondrial respiratory chain. The b-c1 complex mediates electron transfer from ubiquinol to cytochrome c. Contributes to the generation of a proton gradient across the mitochondrial membrane that is then used for ATP synthesis. This chain is Cytochrome b (mt-cyb), found in Acipenser sinensis (Chinese sturgeon).